The primary structure comprises 273 residues: Undecaprenyl-diphosphatase (273 aa).

The next 7 helical transmembrane spans lie at 6–26 (SLLI…LPVS), 45–65 (AKTF…VMFW), 90–110 (LTLI…LLFH), 116–136 (LFNP…LIAA), 190–210 (YAAS…ATAL), 222–242 (GDIP…LIAI), and 252–272 (ISFI…YVVF).

The protein belongs to the UppP family.

It localises to the cell inner membrane. The enzyme catalyses di-trans,octa-cis-undecaprenyl diphosphate + H2O = di-trans,octa-cis-undecaprenyl phosphate + phosphate + H(+). In terms of biological role, catalyzes the dephosphorylation of undecaprenyl diphosphate (UPP). Confers resistance to bacitracin. This Escherichia coli O127:H6 (strain E2348/69 / EPEC) protein is Undecaprenyl-diphosphatase.